The sequence spans 61 residues: uncharacterized protein (61 aa).

This is an uncharacterized protein from Dictyostelium discoideum (Social amoeba).